The sequence spans 197 residues: LexA repressor (197 aa).

The H-T-H motif DNA-binding region spans 28–47 (VREIARRFRITPRGAQLHLV). Catalysis depends on for autocatalytic cleavage activity residues S119 and K156.

This sequence belongs to the peptidase S24 family. As to quaternary structure, homodimer.

It catalyses the reaction Hydrolysis of Ala-|-Gly bond in repressor LexA.. Represses a number of genes involved in the response to DNA damage (SOS response), including recA and lexA. In the presence of single-stranded DNA, RecA interacts with LexA causing an autocatalytic cleavage which disrupts the DNA-binding part of LexA, leading to derepression of the SOS regulon and eventually DNA repair. The chain is LexA repressor from Thermotoga neapolitana.